A 26-amino-acid chain; its full sequence is Thrombopoietin (26 aa).

It belongs to the EPO/TPO family.

The protein localises to the secreted. In terms of biological role, lineage-specific cytokine affecting the proliferation and maturation of megakaryocytes from their committed progenitor cells. It acts at a late stage of megakaryocyte development. It may be the major physiological regulator of circulating platelets. The protein is Thrombopoietin (THPO) of Sus scrofa (Pig).